A 293-amino-acid chain; its full sequence is Ribosomal RNA small subunit methyltransferase A (293 aa).

6 residues coordinate S-adenosyl-L-methionine: N33, V35, G60, E81, D111, and N130.

This sequence belongs to the class I-like SAM-binding methyltransferase superfamily. rRNA adenine N(6)-methyltransferase family. RsmA subfamily.

It localises to the cytoplasm. The enzyme catalyses adenosine(1518)/adenosine(1519) in 16S rRNA + 4 S-adenosyl-L-methionine = N(6)-dimethyladenosine(1518)/N(6)-dimethyladenosine(1519) in 16S rRNA + 4 S-adenosyl-L-homocysteine + 4 H(+). In terms of biological role, specifically dimethylates two adjacent adenosines (A1518 and A1519) in the loop of a conserved hairpin near the 3'-end of 16S rRNA in the 30S particle. May play a critical role in biogenesis of 30S subunits. The polypeptide is Ribosomal RNA small subunit methyltransferase A (Corynebacterium glutamicum (strain ATCC 13032 / DSM 20300 / JCM 1318 / BCRC 11384 / CCUG 27702 / LMG 3730 / NBRC 12168 / NCIMB 10025 / NRRL B-2784 / 534)).